A 190-amino-acid chain; its full sequence is uncharacterized protein (190 aa).

This is an uncharacterized protein from Aquifex aeolicus (strain VF5).